A 1132-amino-acid chain; its full sequence is Ubiquitin-associated protein 2 (1132 aa).

The interval 1 to 29 (MMTSVSNDRCRGAREKPQMPTAHAAQSQK) is disordered. The span at 8-17 (DRCRGAREKP) shows a compositional bias: basic and acidic residues. Residues 48-92 (KNDSDFEAKVKQLMEVTGKNQDECIVALHDCNGDVNKAINILLEG) form the UBA domain. Disordered regions lie at residues 95–202 (DTTS…YSES), 221–248 (GTDE…YGLK), 331–351 (NNQM…SPQS), 380–479 (LKPP…STVS), 602–679 (TSSA…VSTL), 713–749 (PLSQ…VEST), 875–919 (PYSG…LNPG), 996–1033 (GGYG…GSVY), 1040–1059 (DKQG…SALG), and 1087–1132 (PHSQ…YWTN). The segment covering 109–130 (FGRESSENKENREKRTEREASR) has biased composition (basic and acidic residues). The residue at position 166 (arginine 166) is an Omega-N-methylarginine. Over residues 168-182 (KRARGRGFGRGRGRG) the composition is skewed to basic residues. 2 stretches are compositionally biased toward polar residues: residues 233–244 (HSMSQEPPSKSS) and 331–340 (NNQMAPGTAN). The span at 341-351 (STSASSYSPQS) shows a compositional bias: low complexity. Polar residues predominate over residues 392–404 (SSAQQNDTASPPA). Phosphoserine occurs at positions 433 and 440. 2 stretches are compositionally biased toward low complexity: residues 436-448 (LSQL…HQTQ) and 602-618 (TSSA…SSSY). The segment covering 619-630 (DQSSVHTRIAYQ) has biased composition (polar residues). Phosphoserine is present on serine 631. Low complexity predominate over residues 631–644 (SSASPPDSAPGSVA). A compositionally biased stretch (polar residues) spans 652-662 (SQHTVDTTSSV). Positions 713–722 (PLSQLSSSLS) are enriched in low complexity. The span at 723–742 (GHQNSMTSAHATRSTSTPHT) shows a compositional bias: polar residues. A compositionally biased stretch (low complexity) spans 897–914 (PAQAQQSQSQTHHTAQQP). Low complexity predominate over residues 1101-1115 (PSGSGQRSQPSSLQP). Residues 1116–1132 (KSQASKPTYGSAPYWTN) are compositionally biased toward polar residues.

In terms of assembly, may interact with ANXA2.

The protein resides in the nucleus. It is found in the chromosome. Its subcellular location is the cytoplasm. Functionally, recruits the ubiquitination machinery to RNA polymerase II for polyubiquitination, removal and degradation, when the transcription-coupled nucleotide excision repair (TC-NER) machinery fails to resolve DNA damage. May promote the degradation of ANXA2. This chain is Ubiquitin-associated protein 2, found in Mus musculus (Mouse).